Here is a 572-residue protein sequence, read N- to C-terminus: Sulfate adenylyltransferase (572 aa).

The tract at residues 1–169 (MANTPHGGVL…IQAINKLNHY (169 aa)) is N-terminal. The segment at 170–394 (DYVGLRYTPA…LRESHPPRAK (225 aa)) is catalytic. Gln197 serves as a coordination point for sulfate. ATP contacts are provided by residues 197–200 (QTRN) and 291–294 (GRDH). Active-site residues include Thr198, Arg199, and Asn200. Arg199 is a binding site for sulfate. Residue Ala295 coordinates sulfate. Met333 contacts ATP. Positions 395-572 (QGFTIFLTGH…LLESQGFFGN (178 aa)) are allosteric regulation domain; adenylyl-sulfate kinase-like. Residues 434-437 (ETVR), Arg451, 477-478 (IA), and Lys515 each bind 3'-phosphoadenylyl sulfate.

The protein in the N-terminal section; belongs to the sulfate adenylyltransferase family. This sequence in the C-terminal section; belongs to the APS kinase family. As to quaternary structure, homohexamer. Dimer of trimers.

The protein resides in the cytoplasm. The enzyme catalyses sulfate + ATP + H(+) = adenosine 5'-phosphosulfate + diphosphate. The protein operates within sulfur metabolism; hydrogen sulfide biosynthesis; sulfite from sulfate: step 1/3. With respect to regulation, allosterically inhibited by 3'-phosphoadenosine 5'-phosphosulfate (PAPS). Its function is as follows. Catalyzes the first intracellular reaction of sulfate assimilation, forming adenosine-5'-phosphosulfate (APS) from inorganic sulfate and ATP. Plays an important role in sulfate activation as a component of the biosynthesis pathway of sulfur-containing amino acids. This is Sulfate adenylyltransferase from Yarrowia lipolytica (strain CLIB 122 / E 150) (Yeast).